A 418-amino-acid polypeptide reads, in one-letter code: Voltage-gated ClC-type chloride channel ClcB (418 aa).

At methionine 1–arginine 4 the chain is on the cytoplasmic side. The helical transmembrane segment at leucine 5–alanine 25 threads the bilayer. Over methionine 26 to arginine 53 the chain is Periplasmic. Residues leucine 54–phenylalanine 74 form a helical membrane-spanning segment. Topologically, residues threonine 75–lysine 145 are cytoplasmic. The chain crosses the membrane as a helical span at residues leucine 146–glycine 166. Residues serine 167–threonine 177 lie on the Periplasmic side of the membrane. The helical transmembrane segment at methionine 178 to isoleucine 200 threads the bilayer. Residues asparagine 201–tyrosine 221 are Cytoplasmic-facing. Residues alanine 222–methionine 242 form a helical membrane-spanning segment. The Periplasmic segment spans residues asparagine 243–proline 257. Residues tryptophan 258–tryptophan 278 form a helical membrane-spanning segment. Residues glycine 279 to threonine 290 are Cytoplasmic-facing. A helical membrane pass occupies residues alanine 291–alanine 311. Residues serine 312–serine 315 lie on the Periplasmic side of the membrane. Residues glycine 316–tyrosine 336 traverse the membrane as a helical segment. The Cytoplasmic portion of the chain corresponds to glycine 337 to threonine 351. The chain crosses the membrane as a helical span at residues leucine 352–methionine 372. Residues serine 373–glutamate 379 lie on the Periplasmic side of the membrane. A helical membrane pass occupies residues methionine 380 to isoleucine 400. Residues serine 401–serine 418 lie on the Cytoplasmic side of the membrane.

Belongs to the chloride channel (TC 2.A.49) family. ClcB subfamily.

Its subcellular location is the cell inner membrane. Probably acts as an electrical shunt for an outwardly-directed proton pump that is linked to amino acid decarboxylation, as part of the extreme acid resistance (XAR) response. This is Voltage-gated ClC-type chloride channel ClcB (clcB) from Escherichia coli O6:H1 (strain CFT073 / ATCC 700928 / UPEC).